The chain runs to 211 residues: FMN-dependent NADH:quinone oxidoreductase 2 (211 aa).

102–105 (MWNF) serves as a coordination point for FMN.

The protein belongs to the azoreductase type 1 family. Homodimer. Requires FMN as cofactor.

The catalysed reaction is 2 a quinone + NADH + H(+) = 2 a 1,4-benzosemiquinone + NAD(+). The enzyme catalyses N,N-dimethyl-1,4-phenylenediamine + anthranilate + 2 NAD(+) = 2-(4-dimethylaminophenyl)diazenylbenzoate + 2 NADH + 2 H(+). Functionally, quinone reductase that provides resistance to thiol-specific stress caused by electrophilic quinones. In terms of biological role, also exhibits azoreductase activity. Catalyzes the reductive cleavage of the azo bond in aromatic azo compounds to the corresponding amines. The polypeptide is FMN-dependent NADH:quinone oxidoreductase 2 (Bacillus cereus (strain ATCC 14579 / DSM 31 / CCUG 7414 / JCM 2152 / NBRC 15305 / NCIMB 9373 / NCTC 2599 / NRRL B-3711)).